The sequence spans 527 residues: Phospholipase A1-Igamma3, chloroplastic (527 aa).

Residues Met1–Ser52 constitute a chloroplast transit peptide. A compositionally biased stretch (low complexity) spans Thr55–Thr65. The interval Thr55–Glu82 is disordered. Positions His66 to Lys75 are enriched in basic and acidic residues. Residues Gly300 to Gly304 carry the GXSXG motif. The Acyl-ester intermediate role is filled by Ser302. Active-site charge relay system residues include Asp366 and His423.

Belongs to the AB hydrolase superfamily. Lipase family. Highly expressed in flowers. Lower levels in seedlings, leaves and stems.

It is found in the plastid. It localises to the chloroplast. It carries out the reaction 1,2-dihexadecanoyl-sn-glycero-3-phosphocholine + H2O = 2-hexadecanoyl-sn-glycero-3-phosphocholine + hexadecanoate + H(+). The catalysed reaction is a 1,2-diacyl-3-O-(beta-D-galactosyl)-sn-glycerol + H2O = an acyl-3-O-(beta-D-galactosyl)-sn-glycerol + a fatty acid + H(+). The enzyme catalyses a 1,2-diacyl-3-O-[alpha-D-galactosyl-(1-&gt;6)-beta-D-galactosyl]-sn-glycerol + H2O = acyl-3-O-[alpha-D-galactosyl-(1-&gt;6)-beta-D-galactosyl]-sn-glycerol + a fatty acid + H(+). Functionally, acylhydrolase that catalyzes the hydrolysis of phosphatidylcholine at the sn-1 position. Moderate activity toward phosphatidylcholine (PC), monogalactosyldiacylglycerol (MGDG), digalactosyldiacylglycerol (DGDG) and triacylglycerol (TAG). This chain is Phospholipase A1-Igamma3, chloroplastic, found in Arabidopsis thaliana (Mouse-ear cress).